We begin with the raw amino-acid sequence, 150 residues long: CCAAT/enhancer-binding protein gamma (150 aa).

Residue lysine 3 forms a Glycyl lysine isopeptide (Lys-Gly) (interchain with G-Cter in SUMO2) linkage. A disordered region spans residues 27-94; the sequence is GLQQVPQLVP…QKAQDTLQRV (68 aa). Residues 28 to 37 show a composition bias toward low complexity; that stretch reads LQQVPQLVPA. Positions 56-72 are enriched in basic and acidic residues; the sequence is SPMDRNSDEYRQRRERN. The bZIP domain maps to 62–125; it reads SDEYRQRRER…SVLKDLFLEH (64 aa). The interval 66 to 93 is basic motif; the sequence is RQRRERNNMAVKKSRLKSKQKAQDTLQR. Residues 97–118 form a leucine-zipper region; it reads LKEENERLEAKIKLLTKELSVL.

This sequence belongs to the bZIP family. C/EBP subfamily. As to quaternary structure, binds DNA as a dimer and can form stable heterodimers with CEBPA and CEBPB. Interacts with ZNF638; this interaction increases transcriptional activation.

Its subcellular location is the nucleus. In terms of biological role, transcription factor that binds to the promoter and the enhancer regions of target genes. Binds to the enhancer element PRE-I (positive regulatory element-I) of the IL-4 gene. Binds to the promoter and the enhancer of the immunoglobulin heavy chain. Binds to GPE1, a cis-acting element in the G-CSF gene promoter. The polypeptide is CCAAT/enhancer-binding protein gamma (CEBPG) (Homo sapiens (Human)).